Reading from the N-terminus, the 442-residue chain is Phosphatidylserine synthase 2 (442 aa).

The Cytoplasmic portion of the chain corresponds to 1 to 40 (MRRGERRGPAGPLGDGPALGLRRSTESEVYDDGTNTFFWR). A helical transmembrane segment spans residues 41–61 (AHTLTVLFILTCALGYVTLLE). Residues 62–74 (ETPQDTAYNTKRG) lie on the Lumenal side of the membrane. Residues 75–95 (IVASILVFLCFGVTQAKDGPF) form a helical membrane-spanning segment. Residues 96 to 104 (SRPHPAYWR) lie on the Cytoplasmic side of the membrane. The helical transmembrane segment at 105-125 (FWLCVSVVYELFLIFILFQTV) threads the bilayer. Topologically, residues 126 to 291 (QDGRQFMKYI…EWKPASSLRR (166 aa)) are lumenal. Residues Asn159 and Asn215 are each glycosylated (N-linked (GlcNAc...) asparagine). The helical transmembrane segment at 292-312 (WLAVCGIIFVFLLAELNTFYL) threads the bilayer. Lys313 is a topological domain (cytoplasmic). A helical membrane pass occupies residues 314-334 (FVLWMPPEHYLVLLRLVFFVN). The Lumenal portion of the chain corresponds to 335–354 (VGGVAMREIYDFMDDPKFHK). A helical transmembrane segment spans residues 355–375 (KLGQQAWLVAAITATEFLIVV). The Cytoplasmic portion of the chain corresponds to 376–381 (KYDPYT). The chain crosses the membrane as a helical span at residues 382–402 (LTLSLPFYITQCWILGIILVL). Topologically, residues 403–442 (TWTAWRFFIRDITLRYKEIRRQKQEHKYEKDKCLSNGDGH) are lumenal.

It belongs to the phosphatidyl serine synthase family.

It is found in the endoplasmic reticulum membrane. The enzyme catalyses a 1,2-diacyl-sn-glycero-3-phosphoethanolamine + L-serine = a 1,2-diacyl-sn-glycero-3-phospho-L-serine + ethanolamine. The catalysed reaction is 1-hexadecanoyl-2-(9Z-octadecenoyl)-sn-glycero-3-phosphoethanolamine + L-serine = 1-hexadecanoyl-2-(9Z-octadecenoyl)-sn-glycero-3-phospho-L-serine + ethanolamine. It carries out the reaction 1-hexadecanoyl-2-(4Z,7Z,10Z,13Z,16Z,19Z-docosahexaenoyl)-sn-glycero-3-phosphoethanolamine + L-serine = 1-hexadecanoyl-2-(4Z,7Z,10Z,13Z,16Z,19Z-docosahexaenoyl)-sn-glycero-3-phosphoserine + ethanolamine. It catalyses the reaction 1-octadecanoyl-2-(5Z,8Z,11Z,14Z)-eicosatetraenoyl-sn-glycero-3-phosphoethanolamine + L-serine = 1-octadecanoyl-2-(5Z,8Z,11Z,14Z)-eicosatetraenoyl-sn-glycero-3-phosphoserine + ethanolamine. The enzyme catalyses 1-octadecanoyl-2-(4Z,7Z,10Z,13Z,16Z,19Z-docosahexaenoyl)-sn-glycero-3-phosphoethanolamine + L-serine = 1-octadecanoyl-2-(4Z,7Z,10Z,13Z,16Z,19Z-docosahexaenoyl)-sn-glycero-3-phosphoserine + ethanolamine. The catalysed reaction is 1-(1Z-octadecenyl)-2-(4Z,7Z,10Z,13Z,16Z,19Z-docosahexaenoyl)-sn-glycero-3-phosphoethanolamine + L-serine = 1-(1Z-octadecenyl)-2-(4Z,7Z,10Z,13Z,16Z,19Z-docosahexaenoyl)-sn-glycero-3-phospho-L-serine + ethanolamine. It carries out the reaction 1-octadecanoyl-2-(9Z-octadecenoyl)-sn-glycero-3-phosphoethanolamine + L-serine = 1-octadecanoyl-2-(9Z-octadecenoyl)-sn-glycero-3-phospho-L-serine + ethanolamine. It catalyses the reaction 1-(1Z-octadecenyl)-2-(9Z-octadecenoyl)-sn-glycero-3-phosphoethanolamine + L-serine = 1-(1Z-octadecenyl)-2-(9Z-octadecenoyl)-sn-glycero-3-phospho-L-serine + ethanolamine. The enzyme catalyses 1-(1Z-octadecenyl)-2-(5Z,8Z,11Z,14Z- eicosatetraenoyl)-sn-glycero-3-phosphoethanolamine + L-serine = 1-(1Z-octadecenyl)-2-(5Z,8Z,11Z,14Z-eicosatetraenoyl)-sn-glycero-3-phospho-L-serine + ethanolamine. It functions in the pathway phospholipid metabolism; phosphatidylserine biosynthesis. Functionally, catalyzes a base-exchange reaction in which the polar head group of phosphatidylethanolamine (PE) or phosphatidylcholine (PC) is replaced by L-serine. Catalyzes the conversion of phosphatatidylethanolamine and does not act on phosphatidylcholine. Can utilize both phosphatidylethanolamine (PE) plasmalogen and diacyl PE as substrate and the latter is six times better utilized, indicating the importance of an ester linkage at the sn-1 position. Although it shows no sn-1 fatty acyl preference, exhibits significant preference towards docosahexaenoic acid (22:6n-3) compared with 18:1 or 20:4 at the sn-2 position. This chain is Phosphatidylserine synthase 2 (PTDSS1), found in Gallus gallus (Chicken).